We begin with the raw amino-acid sequence, 350 residues long: Putative D-xylulose reductase (350 aa).

Zn(2+) is bound by residues cysteine 43, histidine 68, and glutamate 154.

Belongs to the zinc-containing alcohol dehydrogenase family. The cofactor is Zn(2+).

It catalyses the reaction xylitol + NAD(+) = D-xylulose + NADH + H(+). This chain is Putative D-xylulose reductase, found in Agrobacterium fabrum (strain C58 / ATCC 33970) (Agrobacterium tumefaciens (strain C58)).